Here is a 1208-residue protein sequence, read N- to C-terminus: Spindle pole body protein pcp1 (1208 aa).

A compositionally biased stretch (basic and acidic residues) spans 1 to 17; the sequence is MSERDFNTQSPKFKDEN. Residues 1–91 form a disordered region; sequence MSERDFNTQS…DKYNGSLGDK (91 aa). Polar residues predominate over residues 48-64; the sequence is NDKSSFQTPLRNGSYQP. 4 coiled-coil regions span residues 151 to 375, 387 to 803, 874 to 1091, and 1177 to 1204; these read LREQ…KENQ, TDSM…ANIE, GTET…QSTQ, and ERMK…AKAK. A Phosphoserine modification is found at S906.

In terms of assembly, interacts with ccq1.

Its subcellular location is the nucleus. It localises to the cytoplasm. The protein resides in the cytoskeleton. It is found in the microtubule organizing center. The protein localises to the spindle pole body. Its function is as follows. Spindle pole body component that binds calmodulin. Overexpression of pcp1 causes the formation of supernumerary SPB-like structures and disrupts both mitotic spindle assembly and chromosome segregation. The chain is Spindle pole body protein pcp1 (pcp1) from Schizosaccharomyces pombe (strain 972 / ATCC 24843) (Fission yeast).